The sequence spans 615 residues: Hypermethylated in cancer 2 protein (615 aa).

The region spanning Cys-46–Asp-109 is the BTB domain. Positions Lys-144–Thr-167 are disordered. Phosphoserine is present on residues Ser-166, Ser-169, and Ser-197. 2 disordered regions span residues Arg-182 to Gln-208 and Gly-229 to Ala-421. The interval Gly-246–Ser-250 is binding to CtBP. Residues Ser-280–Ser-296 show a composition bias toward low complexity. Basic and acidic residues predominate over residues Lys-336 to Gly-356. Ser-348 bears the Phosphoserine mark. Over residues Ala-379–Tyr-388 the composition is skewed to low complexity. The residue at position 412 (Ser-412) is a Phosphoserine. 5 C2H2-type zinc fingers span residues Tyr-442–Leu-469, Phe-505–Pro-532, Phe-533–Pro-560, Phe-561–Pro-588, and Tyr-589–Ser-615.

The protein belongs to the krueppel C2H2-type zinc-finger protein family. Hic subfamily. In terms of assembly, self-associates. Interacts with HIC1. In terms of tissue distribution, highest levels in cerebellum.

It is found in the nucleus. Transcriptional repressor. This Homo sapiens (Human) protein is Hypermethylated in cancer 2 protein (HIC2).